A 172-amino-acid chain; its full sequence is Ribosome maturation factor RimM (172 aa).

Residues glutamate 97–leucine 170 form the PRC barrel domain.

It belongs to the RimM family. As to quaternary structure, binds ribosomal protein uS19.

The protein resides in the cytoplasm. An accessory protein needed during the final step in the assembly of 30S ribosomal subunit, possibly for assembly of the head region. Essential for efficient processing of 16S rRNA. May be needed both before and after RbfA during the maturation of 16S rRNA. It has affinity for free ribosomal 30S subunits but not for 70S ribosomes. The protein is Ribosome maturation factor RimM of Listeria innocua serovar 6a (strain ATCC BAA-680 / CLIP 11262).